The sequence spans 65 residues: Defensin Cg-Defm (65 aa).

A signal peptide spans 1-22; sequence MKVFVLLTLAVLLMVSADMAFA. Beta-D-GlcNAc-(1-&gt;4)-Mur2Ac(oyl-L-Ala-gamma-D-Glu-L-Lys-D-Ala-D-Ala)-di-trans,octa-cis-undecaprenyl diphosphate contacts are provided by phenylalanine 24, glycine 25, and cysteine 26. Cystine bridges form between cysteine 26–cysteine 47, cysteine 33–cysteine 56, cysteine 37–cysteine 58, and cysteine 42–cysteine 61. Positions 27–30 are binds to membrane interface; that stretch reads PGNQ. Position 36 (histidine 36) interacts with beta-D-GlcNAc-(1-&gt;4)-Mur2Ac(oyl-L-Ala-gamma-D-Glu-L-Lys-D-Ala-D-Ala)-di-trans,octa-cis-undecaprenyl diphosphate. The interval 48–54 is binds to membrane interface; the sequence is DAATLWL. Residue cysteine 56 coordinates beta-D-GlcNAc-(1-&gt;4)-Mur2Ac(oyl-L-Ala-gamma-D-Glu-L-Lys-D-Ala-D-Ala)-di-trans,octa-cis-undecaprenyl diphosphate.

This sequence belongs to the invertebrate defensin family. In terms of tissue distribution, expressed in the mantle. Low or no expression in most of the organs analyzed, including hemocytes, heart, digestive gland, and gills.

Its subcellular location is the secreted. It is found in the target cell membrane. Functionally, antibacterial peptide mostly active against Gram-positive bacteria (M.lysodeikticus, S.aureus, and the marine bacteria, B.stationis, and M.maritypicum). It acts by selectively inhibiting peptidoglycan biosynthesis through complex formation with the cell wall precursor lipid II (1:1 molar ratio) thus inhibiting cell wall synthesis. It does not disrupt cell membranes. Is noticeably more potent than Cg-Defh1. It shows no or limited activities against Gram-negative bacteria and filamentous fungi. The polypeptide is Defensin Cg-Defm (Magallana gigas (Pacific oyster)).